Here is a 359-residue protein sequence, read N- to C-terminus: Ribosomal RNA small subunit methyltransferase H (359 aa).

Residues 39–41, Asp-58, Phe-87, Asp-108, and Gln-115 each bind S-adenosyl-L-methionine; that span reads AGH. Residues 339-359 form a disordered region; sequence IQGSASPGRAKNTARIRTRRG. The segment covering 350-359 has biased composition (basic residues); it reads NTARIRTRRG.

This sequence belongs to the methyltransferase superfamily. RsmH family.

The protein localises to the cytoplasm. The catalysed reaction is cytidine(1402) in 16S rRNA + S-adenosyl-L-methionine = N(4)-methylcytidine(1402) in 16S rRNA + S-adenosyl-L-homocysteine + H(+). In terms of biological role, specifically methylates the N4 position of cytidine in position 1402 (C1402) of 16S rRNA. The sequence is that of Ribosomal RNA small subunit methyltransferase H from Bifidobacterium longum (strain DJO10A).